Here is a 447-residue protein sequence, read N- to C-terminus: GTPase Der (447 aa).

EngA-type G domains follow at residues 4–165 (QIIT…PEEE) and 180–357 (LQIV…KIWN). GTP contacts are provided by residues 10–17 (GRPNVGKS), 57–61 (DTPGL), 119–122 (NKCE), 186–193 (GRPNAGKS), 233–237 (DTAGL), and 298–301 (NKWD). The region spanning 358 to 443 (KKITTSKLNE…PIRFTYVKTK (86 aa)) is the KH-like domain.

It belongs to the TRAFAC class TrmE-Era-EngA-EngB-Septin-like GTPase superfamily. EngA (Der) GTPase family. In terms of assembly, associates with the 50S ribosomal subunit.

Its function is as follows. GTPase that plays an essential role in the late steps of ribosome biogenesis. The polypeptide is GTPase Der (Rickettsia rickettsii (strain Sheila Smith)).